Consider the following 368-residue polypeptide: Aminomethyltransferase (368 aa).

Belongs to the GcvT family. The glycine cleavage system is composed of four proteins: P, T, L and H.

It carries out the reaction N(6)-[(R)-S(8)-aminomethyldihydrolipoyl]-L-lysyl-[protein] + (6S)-5,6,7,8-tetrahydrofolate = N(6)-[(R)-dihydrolipoyl]-L-lysyl-[protein] + (6R)-5,10-methylene-5,6,7,8-tetrahydrofolate + NH4(+). The glycine cleavage system catalyzes the degradation of glycine. This chain is Aminomethyltransferase, found in Thermoanaerobacter pseudethanolicus (strain ATCC 33223 / 39E) (Clostridium thermohydrosulfuricum).